Reading from the N-terminus, the 72-residue chain is uncharacterized protein (72 aa).

Residues 1–17 (MSLGLAIAVGIVLGVVA) form the signal peptide.

This is an uncharacterized protein from Schizosaccharomyces pombe (strain 972 / ATCC 24843) (Fission yeast).